We begin with the raw amino-acid sequence, 133 residues long: Small ribosomal subunit protein uS8c (133 aa).

This sequence belongs to the universal ribosomal protein uS8 family. Part of the 30S ribosomal subunit.

It localises to the plastid. The protein localises to the chloroplast. In terms of biological role, one of the primary rRNA binding proteins, it binds directly to 16S rRNA central domain where it helps coordinate assembly of the platform of the 30S subunit. The polypeptide is Small ribosomal subunit protein uS8c (rps8) (Cyanidium caldarium (Red alga)).